Here is a 97-residue protein sequence, read N- to C-terminus: MLIKQFSRRSKNMKVQILLAFAALFVLAVGSYASESKKLDLRDALLSAMFSADYQLNPQERGCRYFLGECKKTSECCEHLACHDKHKWCAWDWTIGK.

The signal sequence occupies residues 1–33 (MLIKQFSRRSKNMKVQILLAFAALFVLAVGSYA). The propeptide occupies 34–61 (SESKKLDLRDALLSAMFSADYQLNPQER). Disulfide bonds link Cys-63-Cys-77, Cys-70-Cys-82, and Cys-76-Cys-89.

It belongs to the neurotoxin 10 (Hwtx-1) family. 12 (Hntx-12) subfamily. As to expression, expressed by the venom gland.

It is found in the secreted. In terms of biological role, ion channel inhibitor. The sequence is that of U6-theraphotoxin-Hhn1a 4 from Cyriopagopus hainanus (Chinese bird spider).